Reading from the N-terminus, the 703-residue chain is Fanconi anemia group B protein homolog (703 aa).

Belongs to the multisubunit FA complex composed of FANCA, FANCB, FANCC, FANCE, FANCF, FANCG, FANCL/PHF9 and FANCM.

Its subcellular location is the nucleus. Functionally, DNA repair protein required for FANCD2 ubiquitination. This Mus musculus (Mouse) protein is Fanconi anemia group B protein homolog (Fancb).